We begin with the raw amino-acid sequence, 955 residues long: Glycine dehydrogenase (decarboxylating) (955 aa).

Lys-705 carries the N6-(pyridoxal phosphate)lysine modification.

This sequence belongs to the GcvP family. In terms of assembly, the glycine cleavage system is composed of four proteins: P, T, L and H. The cofactor is pyridoxal 5'-phosphate.

The enzyme catalyses N(6)-[(R)-lipoyl]-L-lysyl-[glycine-cleavage complex H protein] + glycine + H(+) = N(6)-[(R)-S(8)-aminomethyldihydrolipoyl]-L-lysyl-[glycine-cleavage complex H protein] + CO2. Functionally, the glycine cleavage system catalyzes the degradation of glycine. The P protein binds the alpha-amino group of glycine through its pyridoxal phosphate cofactor; CO(2) is released and the remaining methylamine moiety is then transferred to the lipoamide cofactor of the H protein. The protein is Glycine dehydrogenase (decarboxylating) of Aliivibrio fischeri (strain ATCC 700601 / ES114) (Vibrio fischeri).